The following is an 87-amino-acid chain: Tektin-2 (87 aa).

A coiled-coil region spans residues 26 to 55; sequence VEEELLKEVEVIEATKKALQQRVSQAFQQL.

Belongs to the tektin family. Microtubule inner protein component of sperm flagellar doublet microtubules. May interact with CCDC172. Tyrosine phosphorylated. In terms of processing, ubiquitinated, leading to its degradation. Deubiquitinated by USP16, promoting its stability. As to expression, detected in sperm flagella (at protein level).

It localises to the cytoplasm. The protein resides in the cytoskeleton. Its subcellular location is the cilium axoneme. The protein localises to the flagellum axoneme. It is found in the microtubule organizing center. Functionally, microtubule inner protein (MIP) part of the dynein-decorated doublet microtubules (DMTs) in cilia and flagellar axoneme. Plays a key role in the assembly or attachment of the inner dynein arm to microtubules in sperm flagella and tracheal cilia. Forms filamentous polymers in the walls of ciliary and flagellar microtubules. The chain is Tektin-2 from Mesocricetus auratus (Golden hamster).